The sequence spans 121 residues: Large ribosomal subunit protein uL18 (121 aa).

Belongs to the universal ribosomal protein uL18 family. As to quaternary structure, part of the 50S ribosomal subunit; part of the 5S rRNA/L5/L18/L25 subcomplex. Contacts the 5S and 23S rRNAs.

Functionally, this is one of the proteins that bind and probably mediate the attachment of the 5S RNA into the large ribosomal subunit, where it forms part of the central protuberance. The polypeptide is Large ribosomal subunit protein uL18 (Paraburkholderia xenovorans (strain LB400)).